Consider the following 273-residue polypeptide: MVRLHIKRGDESQFLFDTSVIVPVEALVKQITAIYNGILKIDRICSEMAELAEHDLKLKDEWEERCVPSGGSVFKKDEIGRRNGHAPNDSMKKVLQKTMEEAKALISKKQAEANVCVTLEMVKEATDQLRGAVMIVYPMGLPPHDPIRMEFENNEDLSGTHAGQLVIQEPESQLWWAGKELQRKQKLSDYVGKNEKTKIIVKIQKRGQGAPGREPVISQEEQKNLMMHYYRRQEELKKLEVDEDISYLNAEWADSNSLKRQFQGVNDIKWKPR.

It belongs to the CFAP298 family.

It localises to the cytoplasm. Its subcellular location is the cytoskeleton. The protein resides in the cilium basal body. Plays a role in motile cilium function, possibly by acting on outer dynein arm assembly. Seems to be important for initiation rather than maintenance of cilium motility. Required for correct positioning of the cilium at the apical cell surface, suggesting an additional role in the planar cell polarity (PCP) pathway. May suppress canonical Wnt signaling activity. The polypeptide is Cilia- and flagella-associated protein 298-B (cfap298-b) (Xenopus laevis (African clawed frog)).